We begin with the raw amino-acid sequence, 301 residues long: Probable alpha-L-glutamate ligase (301 aa).

Residues leucine 104 to glutamate 287 form the ATP-grasp domain. ATP is bound by residues lysine 141, glutamate 178 to tyrosine 179, aspartate 187, and arginine 211 to asparagine 213. Residues aspartate 248, glutamate 260, and asparagine 262 each contribute to the Mg(2+) site. Residues aspartate 248, glutamate 260, and asparagine 262 each contribute to the Mn(2+) site.

The protein belongs to the RimK family. Mg(2+) serves as cofactor. The cofactor is Mn(2+).

This Pseudomonas savastanoi pv. phaseolicola (strain 1448A / Race 6) (Pseudomonas syringae pv. phaseolicola (strain 1448A / Race 6)) protein is Probable alpha-L-glutamate ligase.